The primary structure comprises 445 residues: Inositol-pentakisphosphate 2-kinase IPK1 (445 aa).

ATP-binding positions include glycine 19–asparagine 22 and arginine 40. Residue arginine 127 participates in substrate binding. Residues serine 144–histidine 146 and glutamate 162–lysine 164 each bind ATP. An EXKPK motif motif is present at residues glutamate 162–lysine 166. Residues lysine 166, lysine 196, and asparagine 234 each coordinate substrate. Residue arginine 237 coordinates ATP. Residues histidine 312, cysteine 322, cysteine 325, and histidine 341 each coordinate Zn(2+). Aspartate 363 contributes to the substrate binding site. Aspartate 402 is an ATP binding site. Residues lysine 406, lysine 410, and tyrosine 414 each coordinate substrate.

This sequence belongs to the IPK1 type 2 family. Zn(2+) is required as a cofactor.

The enzyme catalyses 1D-myo-inositol 1,3,4,5,6-pentakisphosphate + ATP = 1D-myo-inositol hexakisphosphate + ADP + H(+). Phosphorylates Ins(1,3,4,5,6)P5 at position 2 to form Ins(1,2,3,4,5,6)P6 (InsP6 or phytate). Phytate is a regulator of intracellular signaling, a highly abundant animal antinutrient, and a phosphate store in plant seeds. Also phosphorylates Ins(1,3,4,6)P4 and Ins(1,4,5,6)P4 to produce Ins(1,2,3,4,6)P5 and Ins(1,2,4,5,6)P5. This chain is Inositol-pentakisphosphate 2-kinase IPK1, found in Oryza sativa subsp. indica (Rice).